Consider the following 478-residue polypeptide: Antiviral innate immune response effector IFIT1 (478 aa).

TPR repeat units lie at residues V52–E85, L95–P128, P139–N174, I183–N216, Y218–S249, and T251–S284. W147 lines the mRNA pocket. Position 190 (G190) interacts with RNA. Residues K259, H289, Q290, and K336 each coordinate RNA. 4 TPR repeats span residues A305–F339, E340–V373, Q378–S412, and L437–F470.

The protein belongs to the IFIT family. Component of an interferon-dependent multiprotein complex, at least composed of IFIT1, IFIT2 and IFIT3. Interacts (via TPR repeats 1-4) with RPL15. Interacts with STING1/MITA; could disrupt STING1 interaction with MAVS or TBK1, acting as a negative-feedback regulator of virus-triggered signaling. Interacts with EIF3E; this could be an alternative way to inhibit translation. Phosphorylated. Post-translationally, ISGylated.

The protein resides in the cytoplasm. Its function is as follows. Plays a key role in the innate immune response as part of an interferon-dependent multiprotein complex, recognizing and sequestering viral RNAs that lack host-specific 2'-O-methylation at their 5' cap. By distinguishing these RNAs from host mRNAs, inhibits their translation by competing with the translation initiation factor eIF4E. Could also prevent viral replication through its interaction with DNA replication origin-binding protein E1 of several viruses. Causes the translocation of E1 from the nucleus to the cytoplasm and can also inhibit its helicase activity in vitro. The protein is Antiviral innate immune response effector IFIT1 of Macaca fascicularis (Crab-eating macaque).